The following is a 512-amino-acid chain: UDP-N-acetylmuramate--L-alanine ligase (512 aa).

Position 132 to 138 (132 to 138 (GAHGKTT)) interacts with ATP.

Belongs to the MurCDEF family.

The protein localises to the cytoplasm. It catalyses the reaction UDP-N-acetyl-alpha-D-muramate + L-alanine + ATP = UDP-N-acetyl-alpha-D-muramoyl-L-alanine + ADP + phosphate + H(+). Its pathway is cell wall biogenesis; peptidoglycan biosynthesis. In terms of biological role, cell wall formation. This chain is UDP-N-acetylmuramate--L-alanine ligase, found in Bifidobacterium longum (strain DJO10A).